The primary structure comprises 245 residues: Protein-glutamine gamma-glutamyltransferase (245 aa).

Belongs to the bacillus TGase family.

It carries out the reaction L-glutaminyl-[protein] + L-lysyl-[protein] = [protein]-L-lysyl-N(6)-5-L-glutamyl-[protein] + NH4(+). Functionally, probably plays a role in the assembly of the spore coat proteins by catalyzing epsilon-(gamma-glutamyl)lysine cross-links. In wild-type spores at 37 degrees Celsius, tgl mediates the cross-linking of GerQ in higher molecular mass forms, probably in cooperation with YabG. The polypeptide is Protein-glutamine gamma-glutamyltransferase (tgl) (Bacillus subtilis (strain 168)).